A 74-amino-acid polypeptide reads, in one-letter code: Putative sulfur carrier protein NMA0882 (74 aa).

Cys-13 functions as the Cysteine persulfide intermediate in the catalytic mechanism.

Belongs to the sulfur carrier protein TusA family.

The protein is Putative sulfur carrier protein NMA0882 of Neisseria meningitidis serogroup A / serotype 4A (strain DSM 15465 / Z2491).